A 76-amino-acid polypeptide reads, in one-letter code: ATP synthase subunit 9, mitochondrial (76 aa).

2 helical membrane-spanning segments follow: residues 10-30 (IGAG…AIVF) and 52-72 (ILGF…SFLL).

Belongs to the ATPase C chain family. As to quaternary structure, F-type ATPases have 2 components, CF(1) - the catalytic core - and CF(0) - the membrane proton channel. CF(1) has five subunits: alpha(3), beta(3), gamma(1), delta(1), epsilon(1). CF(0) has three main subunits: a, b and c.

The protein localises to the mitochondrion membrane. Mitochondrial membrane ATP synthase (F(1)F(0) ATP synthase or Complex V) produces ATP from ADP in the presence of a proton gradient across the membrane which is generated by electron transport complexes of the respiratory chain. F-type ATPases consist of two structural domains, F(1) - containing the extramembraneous catalytic core and F(0) - containing the membrane proton channel, linked together by a central stalk and a peripheral stalk. During catalysis, ATP synthesis in the catalytic domain of F(1) is coupled via a rotary mechanism of the central stalk subunits to proton translocation. Part of the complex F(0) domain. A homomeric c-ring of probably 10 subunits is part of the complex rotary element. The polypeptide is ATP synthase subunit 9, mitochondrial (ATP9) (Kluyveromyces lactis (strain ATCC 8585 / CBS 2359 / DSM 70799 / NBRC 1267 / NRRL Y-1140 / WM37) (Yeast)).